Reading from the N-terminus, the 687-residue chain is Auxin response factor 14 (687 aa).

The TF-B3 DNA-binding region spans 133-235 (FCKTLTASDT…QLRLGVRRAV (103 aa)).

Belongs to the ARF family. As to quaternary structure, homo and heterodimers. As to expression, expressed in roots, culms, leaves and young panicles.

The protein localises to the nucleus. Functionally, auxin response factors (ARFs) are transcriptional factors that bind specifically to the DNA sequence 5'-TGTCTC-3' found in the auxin-responsive promoter elements (AuxREs). The sequence is that of Auxin response factor 14 (ARF14) from Oryza sativa subsp. japonica (Rice).